A 70-amino-acid polypeptide reads, in one-letter code: Mu-conotoxin PnIVB (70 aa).

The N-terminal stretch at 1 to 20 (MMSKLGVLLIICLLLCPLTA) is a signal peptide. The propeptide occupies 21–51 (VPQDGDQPADQPAERMQDDISSEHHPFFDPV).

Post-translationally, contains 3 disulfide bonds. They are not added, since framework IV presents two different connectivities (I-V, II-III, IV-VI and I-III, II-V, IV-VI). Expressed by the venom duct.

It is found in the secreted. Mu-conotoxins block voltage-gated sodium channels (Nav). Blocks reversibly sodium channels in molluskan neurons, but has no effect on sodium currents in bovine chromaffin cells or in rat brain synaptosomes. Induces paralysis in bivalve mollusks (Mytilus). No effect are observed on fish (Gambusia) and fly larvae (Sarcophaga). Is approximately 6 times more potent than PnIVA in blockade of the sodium current in Lymnaea neurons. The polypeptide is Mu-conotoxin PnIVB (Conus pennaceus (Feathered cone)).